The following is a 165-amino-acid chain: Chorismate pyruvate-lyase (165 aa).

The substrate site is built by M35, R77, L115, and E156.

Belongs to the UbiC family. Monomer.

It localises to the cytoplasm. It carries out the reaction chorismate = 4-hydroxybenzoate + pyruvate. The protein operates within cofactor biosynthesis; ubiquinone biosynthesis. Functionally, removes the pyruvyl group from chorismate, with concomitant aromatization of the ring, to provide 4-hydroxybenzoate (4HB) for the ubiquinone pathway. The protein is Chorismate pyruvate-lyase of Escherichia coli O157:H7.